The chain runs to 527 residues: Probable serine/threonine-protein kinase DDB_G0271538 (527 aa).

Over residues 1–10 the composition is skewed to basic and acidic residues; the sequence is MNINFSKDDI. The segment at 1–24 is disordered; it reads MNINFSKDDITGLPKSTKEEDEND. Positions 33–294 constitute a Protein kinase domain; the sequence is LFMDVEIGRG…KIVVEGLKVL (262 aa). ATP-binding positions include 39 to 47 and lysine 60; that span reads IGRGSFGQV. Catalysis depends on aspartate 156, which acts as the Proton acceptor. Disordered regions lie at residues 304–375, 422–452, and 485–527; these read VKGK…ISGS, FTPP…DDVP, and TALD…KKKL. The span at 313–324 shows a compositional bias: acidic residues; it reads DPDEDSFIDPND. Residues 325 to 359 show a composition bias toward low complexity; it reads DSNNNNNSENNNNNNDNSNENNENNNENNNNSNEN. A compositionally biased stretch (acidic residues) spans 440–452; it reads VDEDEDEDEDDVP. Basic residues predominate over residues 512-527; the sequence is PKKKPNNKNKKKKKKL.

It belongs to the protein kinase superfamily. TKL Ser/Thr protein kinase family.

It catalyses the reaction L-seryl-[protein] + ATP = O-phospho-L-seryl-[protein] + ADP + H(+). It carries out the reaction L-threonyl-[protein] + ATP = O-phospho-L-threonyl-[protein] + ADP + H(+). This is Probable serine/threonine-protein kinase DDB_G0271538 from Dictyostelium discoideum (Social amoeba).